The sequence spans 86 residues: uncharacterized protein (86 aa).

An N-terminal signal peptide occupies residues 1–22 (MKTINTVVAAMALSTLSFGVFA).

Belongs to the BhsA/McbA family.

The protein localises to the periplasm. This is an uncharacterized protein from Escherichia coli O6:H1 (strain CFT073 / ATCC 700928 / UPEC).